Consider the following 123-residue polypeptide: uncharacterized protein (123 aa).

A signal peptide spans 1–20 (MSPLIVGTLIIILLSGLATA). The GPI-anchor amidated glycine moiety is linked to residue G96. The propeptide at 97–123 (SSPTTKRVIYIVMILLVLITLAVNLKH) is removed in mature form.

The protein resides in the cell membrane. This is an uncharacterized protein from Schizosaccharomyces pombe (strain 972 / ATCC 24843) (Fission yeast).